The following is a 76-amino-acid chain: MENKLSFEEAISQLEHLVSKLEQGDVPLEEAISYFKEGMELSKLCDEKLKDVQEQMAVILGEDGELKPFTALGDEA.

The protein belongs to the XseB family. In terms of assembly, heterooligomer composed of large and small subunits.

It is found in the cytoplasm. The enzyme catalyses Exonucleolytic cleavage in either 5'- to 3'- or 3'- to 5'-direction to yield nucleoside 5'-phosphates.. Its function is as follows. Bidirectionally degrades single-stranded DNA into large acid-insoluble oligonucleotides, which are then degraded further into small acid-soluble oligonucleotides. The sequence is that of Exodeoxyribonuclease 7 small subunit from Bacillus mycoides (strain KBAB4) (Bacillus weihenstephanensis).